A 581-amino-acid polypeptide reads, in one-letter code: Polypeptide N-acetylgalactosaminyltransferase 12 (581 aa).

Residues 1-19 (MWGRTARRRCPRELRRGRE) are Cytoplasmic-facing. Residues 20 to 37 (ALLVLLALLALAGLGSVL) traverse the membrane as a helical; Signal-anchor for type II membrane protein segment. Topologically, residues 38–581 (RAQRGAGAGA…QKWFFKERML (544 aa)) are lumenal. The interval 43-67 (AGAGAAEPGPPRTPRPGRREPVMPR) is disordered. Disulfide bonds link Cys-125–Cys-358, Cys-349–Cys-422, Cys-458–Cys-479, Cys-506–Cys-521, and Cys-547–Cys-566. The interval 135 to 244 (LPRTSVIIAF…EGWLEPLLQR (110 aa)) is catalytic subdomain A. Asp-176 and Arg-205 together coordinate substrate. Mn(2+) is bound by residues Asp-228 and His-230. The segment at 304 to 366 (VIRSPTMAGG…PCSHVGHVFP (63 aa)) is catalytic subdomain B. A substrate-binding site is contributed by Trp-335. A Mn(2+)-binding site is contributed by His-363. Substrate is bound at residue Tyr-371. Residues 445-577 (FFGMLQNKGL…NSDHQKWFFK (133 aa)) enclose the Ricin B-type lectin domain.

Belongs to the glycosyltransferase 2 family. GalNAc-T subfamily. Mn(2+) serves as cofactor. As to expression, widely expressed at different levels of expression. Highly expressed in digestive organs such as small intestine, stomach, pancreas and colon. Expressed at intermediate level in testis, thyroid gland and spleen. Weakly expressed in whole brain, cerebral cortex, cerebellum, fetal brain, bone marrow, thymus, leukocytes, heart, skeletal muscle, liver, lung, esophagus, kidney, adrenal gland, mammary gland, uterus, placenta, ovary and prostate.

It localises to the golgi apparatus membrane. It catalyses the reaction L-seryl-[protein] + UDP-N-acetyl-alpha-D-galactosamine = a 3-O-[N-acetyl-alpha-D-galactosaminyl]-L-seryl-[protein] + UDP + H(+). It carries out the reaction L-threonyl-[protein] + UDP-N-acetyl-alpha-D-galactosamine = a 3-O-[N-acetyl-alpha-D-galactosaminyl]-L-threonyl-[protein] + UDP + H(+). It participates in protein modification; protein glycosylation. Its function is as follows. Catalyzes the initial reaction in O-linked oligosaccharide biosynthesis, the transfer of an N-acetyl-D-galactosamine residue to a serine or threonine residue on the protein receptor. Has activity toward non-glycosylated peptides such as Muc5AC, Muc1a and EA2, and no detectable activity with Muc2 and Muc7. Displays enzymatic activity toward the Gal-NAc-Muc5AC glycopeptide, but no detectable activity to mono-GalNAc-glycosylated Muc1a, Muc2, Muc7 and EA2. May play an important role in the initial step of mucin-type oligosaccharide biosynthesis in digestive organs. This Homo sapiens (Human) protein is Polypeptide N-acetylgalactosaminyltransferase 12 (GALNT12).